The primary structure comprises 90 residues: DNA-directed RNA polymerase subunit Rpo11 (90 aa).

It belongs to the archaeal Rpo11/eukaryotic RPB11/RPC19 RNA polymerase subunit family. In terms of assembly, part of the RNA polymerase complex.

It is found in the cytoplasm. It catalyses the reaction RNA(n) + a ribonucleoside 5'-triphosphate = RNA(n+1) + diphosphate. DNA-dependent RNA polymerase (RNAP) catalyzes the transcription of DNA into RNA using the four ribonucleoside triphosphates as substrates. This chain is DNA-directed RNA polymerase subunit Rpo11, found in Metallosphaera sedula (strain ATCC 51363 / DSM 5348 / JCM 9185 / NBRC 15509 / TH2).